Reading from the N-terminus, the 1368-residue chain is DNA-directed RNA polymerase subunit beta (1368 aa).

Belongs to the RNA polymerase beta chain family. As to quaternary structure, the RNAP catalytic core consists of 2 alpha, 1 beta, 1 beta' and 1 omega subunit. When a sigma factor is associated with the core the holoenzyme is formed, which can initiate transcription.

It catalyses the reaction RNA(n) + a ribonucleoside 5'-triphosphate = RNA(n+1) + diphosphate. Functionally, DNA-dependent RNA polymerase catalyzes the transcription of DNA into RNA using the four ribonucleoside triphosphates as substrates. In Paraburkholderia phymatum (strain DSM 17167 / CIP 108236 / LMG 21445 / STM815) (Burkholderia phymatum), this protein is DNA-directed RNA polymerase subunit beta.